A 612-amino-acid polypeptide reads, in one-letter code: Probable serine/threonine-protein kinase WNK4 (612 aa).

In terms of domain architecture, Protein kinase spans 25–282 (IRYNEVLGRG…AKELLQDPFL (258 aa)). Residues 105–108 (TELF) and Lys-155 contribute to the ATP site. Asp-172 functions as the Proton acceptor in the catalytic mechanism.

It belongs to the protein kinase superfamily. Ser/Thr protein kinase family. WNK subfamily.

The enzyme catalyses L-seryl-[protein] + ATP = O-phospho-L-seryl-[protein] + ADP + H(+). It carries out the reaction L-threonyl-[protein] + ATP = O-phospho-L-threonyl-[protein] + ADP + H(+). The sequence is that of Probable serine/threonine-protein kinase WNK4 (WNK4) from Oryza sativa subsp. japonica (Rice).